Consider the following 227-residue polypeptide: ATP synthase F(0) complex subunit a (227 aa).

A run of 6 helical transmembrane segments spans residues 12-32 (PYLM…LLFP), 69-89 (WALL…MGLL), 98-118 (QLSM…LIGL), 139-159 (IPIL…ALGV), 170-190 (LLIQ…PSIS), and 196-216 (ILLL…YVFV).

Belongs to the ATPase A chain family. As to quaternary structure, component of the ATP synthase complex composed at least of ATP5F1A/subunit alpha, ATP5F1B/subunit beta, ATP5MC1/subunit c (homooctomer), MT-ATP6/subunit a, MT-ATP8/subunit 8, ATP5ME/subunit e, ATP5MF/subunit f, ATP5MG/subunit g, ATP5MK/subunit k, ATP5MJ/subunit j, ATP5F1C/subunit gamma, ATP5F1D/subunit delta, ATP5F1E/subunit epsilon, ATP5PF/subunit F6, ATP5PB/subunit b, ATP5PD/subunit d, ATP5PO/subunit OSCP. ATP synthase complex consists of a soluble F(1) head domain (subunits alpha(3) and beta(3)) - the catalytic core - and a membrane F(0) domain - the membrane proton channel (subunits c, a, 8, e, f, g, k and j). These two domains are linked by a central stalk (subunits gamma, delta, and epsilon) rotating inside the F1 region and a stationary peripheral stalk (subunits F6, b, d, and OSCP). Interacts with DNAJC30; interaction is direct.

It is found in the mitochondrion inner membrane. The enzyme catalyses H(+)(in) = H(+)(out). In terms of biological role, subunit a, of the mitochondrial membrane ATP synthase complex (F(1)F(0) ATP synthase or Complex V) that produces ATP from ADP in the presence of a proton gradient across the membrane which is generated by electron transport complexes of the respiratory chain. ATP synthase complex consist of a soluble F(1) head domain - the catalytic core - and a membrane F(1) domain - the membrane proton channel. These two domains are linked by a central stalk rotating inside the F(1) region and a stationary peripheral stalk. During catalysis, ATP synthesis in the catalytic domain of F(1) is coupled via a rotary mechanism of the central stalk subunits to proton translocation. With the subunit c (ATP5MC1), forms the proton-conducting channel in the F(0) domain, that contains two crucial half-channels (inlet and outlet) that facilitate proton movement from the mitochondrial intermembrane space (IMS) into the matrix. Protons are taken up via the inlet half-channel and released through the outlet half-channel, following a Grotthuss mechanism. The protein is ATP synthase F(0) complex subunit a of Coturnix japonica (Japanese quail).